The following is a 779-amino-acid chain: METALTKTPEKRQVIFLAILLLLWEASSEAISYSMPEETESGYLVANLAQDLGLRVGELTTRGARIHHNGNKELLQLDAERGNLLLKEKPDREALCGATEPCVLHFQIILENPVQFFQTDLQFTDINDHFPEFPDTEMLLKIQEIAQPGTVFPLKAAQDPDIGSNAVQNYTVSPNLHFHVVTLSRSDDRKYPELVLDRALDREEQPELTLILTALDGGAPPKSGTTTVRIEVVDINDNAPQFLQSLYAVEVPENSPLNALVVTVSARDLDAGIHGNVAYSLFQGGGGPQPFVIDEITGEIRLKGALDFEATSYYTMEIVATDSGGLSGKCTVAIQVLDVNDNAPKLTISSLTSSIPENAPEAVVAVFSVSDPDSGDNGRMVCSIQNGLPFLLKPTFKNFYTLVTERPLDRESNAEYNITITVSDLGTPRLTTQHTITVQVSDINDNAPAFTQTSYTLFVHENNSPALHIGTISATDSDSGSNGLIIYSLLPPHDQQLGLASLISINSDNGQLFALRALDYEALQAFEFHVGATDRGSPALSSEALVRVVVLDDNDNAPFVLYPLQNASAPCTELLPRAAEPGYLITKVVAVDRDSGQNAWLSFQLLKATEPGLFSVWAHNGEVRTTRLLSERDAPKHRLLLLVKDNGEPLRSASVMLQVLVVDGFSQPYLPLPEVALNPTQEEDMLTLYLVIALASVSSLFLLSVLLFVGVKLCKKAREASLADCSIPEGHFPSHLVDVSGAGTLSQSYHYEVCLTEDSGTSDFKFMNPIIPSSLLQDS.

Residues 1 to 28 form the signal peptide; that stretch reads METALTKTPEKRQVIFLAILLLLWEASS. At 29–690 the chain is on the extracellular side; that stretch reads EAISYSMPEE…QEEDMLTLYL (662 aa). 5 Cadherin domains span residues 75-133, 134-242, 243-346, 347-450, and 451-560; these read LQLD…FPEF, PDTE…APQF, LQSL…APKL, TISS…APAF, and TQTS…APFV. An intrachain disulfide couples Cys96 to Cys102. Asn169 is a glycosylation site (N-linked (GlcNAc...) asparagine). A glycan (O-linked (Man) serine) is linked at Ser223. Thr225 and Thr227 each carry an O-linked (Man) threonine glycan. The N-linked (GlcNAc...) asparagine glycan is linked to Asn417. The N-linked (GlcNAc...) asparagine glycan is linked to Asn566. One can recognise a Cadherin 6 domain in the interval 575–675; that stretch reads LPRAAEPGYL…SQPYLPLPEV (101 aa). The chain crosses the membrane as a helical span at residues 691–711; sequence VIALASVSSLFLLSVLLFVGV. Over 712-779 the chain is Cytoplasmic; the sequence is KLCKKAREAS…IIPSSLLQDS (68 aa).

In terms of assembly, forms homodimers in trans (molecules expressed by two different cells). Forms promiscuous heterodimers in cis (at the plasma membrane of the same cell) with other protocadherins.

Its subcellular location is the cell membrane. In terms of biological role, calcium-dependent cell-adhesion protein involved in cells self-recognition and non-self discrimination. Thereby, it is involved in the establishment and maintenance of specific neuronal connections in the brain. The chain is Protocadherin beta-8 from Mus musculus (Mouse).